A 99-amino-acid chain; its full sequence is 10 kDa heat shock protein, mitochondrial (99 aa).

It belongs to the GroES chaperonin family. Homoheptamer arranged in a ring structure. 2 heptameric Hsp10 rings interact with a Hsp60 tetradecamer in the structure of a back-to-back double heptameric ring to form the symmetrical football complex.

It is found in the mitochondrion matrix. Co-chaperonin implicated in mitochondrial protein import and macromolecular assembly. Together with Hsp60, facilitates the correct folding of imported proteins. May also prevent misfolding and promote the refolding and proper assembly of unfolded polypeptides generated under stress conditions in the mitochondrial matrix. The functional units of these chaperonins consist of heptameric rings of the large subunit Hsp60, which function as a back-to-back double ring. In a cyclic reaction, Hsp60 ring complexes bind one unfolded substrate protein per ring, followed by the binding of ATP and association with 2 heptameric rings of the co-chaperonin Hsp10. This leads to sequestration of the substrate protein in the inner cavity of Hsp60 where, for a certain period of time, it can fold undisturbed by other cell components. Synchronous hydrolysis of ATP in all Hsp60 subunits results in the dissociation of the chaperonin rings and the release of ADP and the folded substrate protein. This chain is 10 kDa heat shock protein, mitochondrial (hspe1), found in Oryzias latipes (Japanese rice fish).